Consider the following 199-residue polypeptide: uncharacterized protein (199 aa).

This is an uncharacterized protein from Methanocaldococcus jannaschii (strain ATCC 43067 / DSM 2661 / JAL-1 / JCM 10045 / NBRC 100440) (Methanococcus jannaschii).